The chain runs to 1195 residues: EST/SMG-like protein 2 (1195 aa).

Composition is skewed to polar residues over residues 1 to 10 (MPETSVQNPL), 18 to 35 (TRSM…SATP), and 55 to 68 (VLNP…SNSV). 4 disordered regions span residues 1 to 38 (MPET…PSFP), 55 to 130 (VLNP…VGIT), 179 to 268 (SKSE…PASN), and 610 to 643 (DKKE…DEIM). 2 stretches are compositionally biased toward basic and acidic residues: residues 83-109 (RFSD…EKNP) and 197-208 (INDKDNSARDQD). 2 stretches are compositionally biased toward low complexity: residues 210 to 252 (NNSG…NNSD) and 619 to 629 (NNDSSVTESST). One can recognise a PINc domain in the interval 1025–1164 (TYFVFDATSW…LISDDDAMKK (140 aa)).

In terms of assembly, transiently interacts with PEX14.

The protein resides in the cytoplasm. The protein localises to the nucleus. Its subcellular location is the peroxisome. May be involved in the regulation of gene expression responses of environment-sensing pathways. The sequence is that of EST/SMG-like protein 2 from Saccharomyces cerevisiae (strain ATCC 204508 / S288c) (Baker's yeast).